The primary structure comprises 122 residues: UPF0382 membrane protein SERP0230 (122 aa).

4 helical membrane-spanning segments follow: residues 3 to 23, 46 to 66, 69 to 89, and 98 to 118; these read VFII…AFGA, MYHG…SINV, AGWL…FLAL, and ITPI…IATL.

It belongs to the UPF0382 family.

Its subcellular location is the cell membrane. The protein is UPF0382 membrane protein SERP0230 of Staphylococcus epidermidis (strain ATCC 35984 / DSM 28319 / BCRC 17069 / CCUG 31568 / BM 3577 / RP62A).